The following is a 208-amino-acid chain: Small ribosomal subunit protein uS4 (208 aa).

One can recognise an S4 RNA-binding domain in the interval 98 to 158; it reads RRLDNIAYRL…EKSRKVACIN (61 aa).

This sequence belongs to the universal ribosomal protein uS4 family. As to quaternary structure, part of the 30S ribosomal subunit. Contacts protein S5. The interaction surface between S4 and S5 is involved in control of translational fidelity.

Functionally, one of the primary rRNA binding proteins, it binds directly to 16S rRNA where it nucleates assembly of the body of the 30S subunit. With S5 and S12 plays an important role in translational accuracy. The chain is Small ribosomal subunit protein uS4 from Geotalea uraniireducens (strain Rf4) (Geobacter uraniireducens).